Reading from the N-terminus, the 101-residue chain is Small ribosomal subunit protein uS14 (101 aa).

Belongs to the universal ribosomal protein uS14 family. As to quaternary structure, part of the 30S ribosomal subunit. Contacts proteins S3 and S10.

Binds 16S rRNA, required for the assembly of 30S particles and may also be responsible for determining the conformation of the 16S rRNA at the A site. The protein is Small ribosomal subunit protein uS14 of Francisella tularensis subsp. holarctica (strain FTNF002-00 / FTA).